The primary structure comprises 49 residues: Light-harvesting protein B-880 alpha chain (49 aa).

The Cytoplasmic portion of the chain corresponds to 1–12 (MYKLWLLFDPRR). The chain crosses the membrane as a helical span at residues 13–33 (TLVALSAFLFVLGLIIHFISL). Residue H29 coordinates a bacteriochlorophyll. The Periplasmic portion of the chain corresponds to 34–49 (STDRFNWLEGKPAVRA).

This sequence belongs to the antenna complex alpha subunit family. As to quaternary structure, the core complex is formed by different alpha and beta chains, binding bacteriochlorophyll molecules, and arranged most probably in tetrameric structures disposed around the reaction center. The non-pigmented gamma chains may constitute additional components.

Its subcellular location is the cell inner membrane. Functionally, antenna complexes are light-harvesting systems, which transfer the excitation energy to the reaction centers. This chain is Light-harvesting protein B-880 alpha chain, found in Rhodoblastus acidophilus (Rhodopseudomonas acidophila).